Here is a 469-residue protein sequence, read N- to C-terminus: Ufm1-specific protease 2 (469 aa).

Met-1 is subject to N-acetylmethionine. Catalysis depends on residues Cys-302, Asp-426, and His-428.

It belongs to the peptidase C78 family. As to expression, expressed in brain.

The protein resides in the endoplasmic reticulum. It localises to the cytoplasm. The protein localises to the nucleus. Thiol-dependent isopeptidase that specifically cleaves UFM1, a ubiquitin-like modifier protein, from conjugated proteins, such as CD274/PD-L1, CYB5R3, DDRGK1, MRE11, RPL26/uL24, TRIP4 and RPL26/uL24. While it is also able to mediate the processing of UFM1 precursors, a prerequisite for conjugation reactions, UFSP2 mainly acts as a protein deUFMylase that mediates deconjugation of UFM1 from target proteins. Mediates deUFMylation of RPL26/uL24, a critical step to release the UFM1 ribosome E3 ligase (UREL) complex during the recycling of 60S ribosome subunits from the endoplasmic reticulum. Catalyzes deUFMylation of TRIP4, regulating intracellular nuclear receptors transactivation and thereby regulate cell proliferation and differentiation. This Homo sapiens (Human) protein is Ufm1-specific protease 2.